Here is a 423-residue protein sequence, read N- to C-terminus: Diaminobutyrate--2-oxoglutarate transaminase (423 aa).

The residue at position 271 (lysine 271) is an N6-(pyridoxal phosphate)lysine.

The protein belongs to the class-III pyridoxal-phosphate-dependent aminotransferase family. It depends on pyridoxal 5'-phosphate as a cofactor.

The catalysed reaction is L-2,4-diaminobutanoate + 2-oxoglutarate = L-aspartate 4-semialdehyde + L-glutamate. It functions in the pathway amine and polyamine biosynthesis; ectoine biosynthesis; L-ectoine from L-aspartate 4-semialdehyde: step 1/3. Catalyzes reversively the conversion of L-aspartate beta-semialdehyde (ASA) to L-2,4-diaminobutyrate (DABA) by transamination with L-glutamate. In Streptomyces avermitilis (strain ATCC 31267 / DSM 46492 / JCM 5070 / NBRC 14893 / NCIMB 12804 / NRRL 8165 / MA-4680), this protein is Diaminobutyrate--2-oxoglutarate transaminase (ectB).